Consider the following 199-residue polypeptide: MSLKDRFDKFIDYFTEDGDETEVQEQTVSRPAAPVKQKPELVQPKPVRESKPAPRPAAAAKPQPKPQPKPQPQQKSSTENITRLHARQQELAQHRANADEKITIDVRYPRRYEEATEIVDLLLANESILIDFQYMTEVQARRCLDYLDGARYVLAGNLKKVASTMYLLTPINVVVNVEDIRLPNDVEISEFDFDMKRSR.

Residues 15–79 (TEDGDETEVQ…PQPQQKSSTE (65 aa)) are disordered.

It belongs to the SepF family. As to quaternary structure, homodimer. Interacts with FtsZ.

The protein resides in the cytoplasm. Cell division protein that is part of the divisome complex and is recruited early to the Z-ring. Probably stimulates Z-ring formation, perhaps through the cross-linking of FtsZ protofilaments. Its function overlaps with FtsA. The chain is Cell division protein SepF from Streptococcus sanguinis (strain SK36).